We begin with the raw amino-acid sequence, 196 residues long: MATPRKPNRRDEILQALAEMLESNEGAARITTAKLAKQVGVSEAALYRHFPSKAKMFEGLIEFIEESIFSRVNRILEDEKDTLKRIELLLKLLLAFAERNPGLTRIMTGHALMFENERLRSRINQIFERIELQFKQILRERKLREGKAFPIDESILAAQLVGQVEGSFCRFVRSDFKYQPTENFNEYWALLSAQIQ.

The region spanning 7 to 68 (PNRRDEILQA…GLIEFIEESI (62 aa)) is the HTH tetR-type domain. Residues 31–50 (TTAKLAKQVGVSEAALYRHF) constitute a DNA-binding region (H-T-H motif). The stretch at 71-93 (RVNRILEDEKDTLKRIELLLKLL) forms a coiled coil.

It belongs to the nucleoid occlusion factor SlmA family. In terms of assembly, homodimer. Interacts with FtsZ.

The protein resides in the cytoplasm. Its subcellular location is the nucleoid. Its function is as follows. Required for nucleoid occlusion (NO) phenomenon, which prevents Z-ring formation and cell division over the nucleoid. Acts as a DNA-associated cell division inhibitor that binds simultaneously chromosomal DNA and FtsZ, and disrupts the assembly of FtsZ polymers. SlmA-DNA-binding sequences (SBS) are dispersed on non-Ter regions of the chromosome, preventing FtsZ polymerization at these regions. The polypeptide is Nucleoid occlusion factor SlmA (Aliivibrio fischeri (strain MJ11) (Vibrio fischeri)).